We begin with the raw amino-acid sequence, 728 residues long: Sodium-dependent transporter snf-5 (728 aa).

The Cytoplasmic segment spans residues 1–84; the sequence is MADSGSNEEA…PEEEEEKRDG (84 aa). Residues 1 to 84 are disordered; the sequence is MADSGSNEEA…PEEEEEKRDG (84 aa). 2 stretches are compositionally biased toward low complexity: residues 29–50 and 60–73; these read QQVS…STQS and KNTT…TLDT. The helical transmembrane segment at 85 to 105 threads the bilayer; that stretch reads FGNSFEFVLTSLGLAVGLGNI. Na(+) contacts are provided by G97, A99, V100, and N104. Residues 106–119 lie on the Extracellular side of the membrane; it reads WRFPTRAYNNGGSA. A helical transmembrane segment spans residues 120-140; the sequence is FLIPYLTCAFLFGLPAVYFEF. At 141-162 the chain is on the cytoplasmic side; it reads LTGQYQGKSPPVIFRRVRPILE. A helical membrane pass occupies residues 163-183; the sequence is GVGWMGVFVAALVAIYYIVIV. Topologically, residues 184–285 are extracellular; sequence SWISIYMINI…PSSGMLDFGG (102 aa). C204 and C214 are disulfide-bonded. N210, N225, N232, N237, and N257 each carry an N-linked (GlcNAc...) asparagine glycan. Residues 286 to 306 form a helical membrane-spanning segment; that stretch reads FNWPVFAAMSVCWLLTGLGIL. Over 307-314 the chain is Cytoplasmic; sequence KGAKIMGK. The chain crosses the membrane as a helical span at residues 315 to 335; sequence ISYVSVLVPYVLVVVLFINGV. Residues 336–364 lie on the Extracellular side of the membrane; it reads FQDGSGVGLEMYFGTPNYTKLYEQDTWTE. N352 carries an N-linked (GlcNAc...) asparagine glycan. The chain crosses the membrane as a helical span at residues 365–386; that stretch reads ALKQLCFSLSVGHGGLISLSSY. S372 is a binding site for Na(+). At 387 to 396 the chain is on the cytoplasmic side; the sequence is SPKRNNIFRD. The chain crosses the membrane as a helical span at residues 397–417; sequence ALIVIIGDTTMSLVGGGAVFA. The Extracellular segment spans residues 418 to 451; sequence TLGYLAKATGQDVKDVVKSGLSLAFVVYPEAMTR. Residues 452–472 form a helical membrane-spanning segment; that stretch reads MPVPWLWCFIFFLMLFLLGAS. Position 469 (L469) interacts with Na(+). At 473–495 the chain is on the cytoplasmic side; that stretch reads TEIALVDVFCSCIYDQYPRFRNR. The helical transmembrane segment at 496-516 threads the bilayer; the sequence is KWIVVIAWCSVLYCIGLVFST. Over 517–531 the chain is Extracellular; it reads RAGYYWFEMFDEYAA. Residues 532 to 552 traverse the membrane as a helical segment; sequence GFSSVCTVVCELLVMMYIYGF. Over 553–578 the chain is Cytoplasmic; that stretch reads RNVRDDITEVVGHARNKFTGAIGAHS. The helical transmembrane segment at 579–599 threads the bilayer; the sequence is WYFTANWMVISPSIALILVGL. The Extracellular segment spans residues 600-616; it reads SFVREYPYMGRHDIYPA. Residues 617–637 traverse the membrane as a helical segment; it reads VFDIFGWFLSFLPVIIVPIFM. The Cytoplasmic segment spans residues 638–728; that stretch reads LLNFIRCRNR…DTSSTYHQVY (91 aa). Residues 687-699 are compositionally biased toward acidic residues; the sequence is PWDEENVDLTDSE. Positions 687 to 728 are disordered; that stretch reads PWDEENVDLTDSESESRNAASGDVPIDDVATIDTSSTYHQVY. Polar residues predominate over residues 718-728; it reads IDTSSTYHQVY.

Belongs to the sodium:neurotransmitter symporter (SNF) (TC 2.A.22) family. Expressed in the INT-9 cells and posterior cells of the alimentary canal of the intestine, gut epithelial cells, the pharynx of some worms, two cells of the rectal gland, and in DVA, DVB and DVC neurons and amphid sensory neurons ASI, ADF and ASK neurons.

The protein localises to the cell membrane. In terms of biological role, sodium-dependent amino acid transporter that mediates the uptake of the L-enantiomers of various amino acids, including L-proline and L-methionine, and also of acidic amino acids such as L-glutamic acid and L-aspartic acid. May additionally have a role in potassium-dependent amino acid absorption. In response to the availability of amino acid nutrients, may play a role in dauer formation. May play a role in promoting fertility. The chain is Sodium-dependent transporter snf-5 from Caenorhabditis elegans.